The primary structure comprises 625 residues: Keratin, type II cytoskeletal 1 (625 aa).

A compositionally biased stretch (low complexity) spans 1–12; that stretch reads MSFQCSSRSLCR. The interval 1–27 is disordered; that stretch reads MSFQCSSRSLCRSGGGGGGRNFSSGSA. A head region spans residues 1 to 178; it reads MSFQCSSRSL…DPQIQKVKSQ (178 aa). Omega-N-methylarginine is present on Arg12. 2 positions are modified to phosphoserine: Ser23 and Ser26. Arg51 is modified (omega-N-methylarginine). A Phosphoserine modification is found at Ser69. Positions 171–319 form a coiled coil; it reads QIQKVKSQER…DIDFFSTLYQ (149 aa). The interval 179–214 is coil 1A; that stretch reads EREQIKSLNDKFASFIDKVRFLEQQNQVLQTKWELL. Residues 179-492 enclose the IF rod domain; sequence EREQIKSLND…KLLEGEEIRM (314 aa). The interval 215–233 is linker 1; the sequence is QQVDTSTRTQNLDPFFESY. The segment at 234-325 is coil 1B; the sequence is ISNLRRQVDS…TLYQMELSQM (92 aa). Lys275 carries the post-translational modification N6,N6-dimethyllysine. The segment at 326–349 is linker 12; sequence QTQISETNVVLSMDNNRTLDLDGI. Residues 350-488 are coil 2; sequence IAEVKAQYDS…ATYRKLLEGE (139 aa). The stretch at 388-475 forms a coiled coil; sequence DSVKNTKMEI…ELMNTKLALD (88 aa). Positions 489 to 625 are tail; the sequence is EIRMSGECTP…VSTTYSRGTN (137 aa). Disordered regions lie at residues 496-525 and 560-625; these read CTPNVSVSVSTSHTSMSGTSSRGGGRYGSG and SGGG…RGTN. The span at 500 to 515 shows a compositional bias: low complexity; it reads VSVSVSTSHTSMSGTS. Gly residues-rich tracts occupy residues 516–525 and 560–606; these read SRGGGRYGSG and SGGG…GGVK. Omega-N-methylarginine occurs at positions 517, 574, and 596. A compositionally biased stretch (polar residues) spans 613–625; the sequence is VKFVSTTYSRGTN.

The protein belongs to the intermediate filament family. As to quaternary structure, heterotetramer of two type I and two type II keratins. Heterodimer with KRT10. Two heterodimers of KRT1 and KRT10 form a heterotetramer. Forms a heterodimer with KRT14; the interaction is more abundant in the absence of KRT5. Interacts with ITGB1 in the presence of RACK1 and SRC, and with RACK1. Interacts with C1QBP; the association represents a cell surface kininogen receptor. Interacts with EPPK1; interaction is dependent of higher-order structure of intermediate filament. Post-translationally, undergoes deimination of some arginine residues (citrullination).

Its subcellular location is the cell membrane. It localises to the cytoplasm. In terms of biological role, may regulate the activity of kinases such as PKC and SRC via binding to integrin beta-1 (ITB1) and the receptor of activated protein C kinase 1 (RACK1). In complex with C1QBP is a high affinity receptor for kininogen-1/HMWK. The protein is Keratin, type II cytoskeletal 1 of Rattus norvegicus (Rat).